Reading from the N-terminus, the 97-residue chain is High mobility group protein homolog NHP1 (97 aa).

Residues 1 to 24 (MAGASDRTGVRRPRKAKKDPNAPK) form a disordered region. Positions 23–93 (PKRALSSYMF…RYEREKAEYA (71 aa)) form a DNA-binding region, HMG box.

Its subcellular location is the nucleus. This chain is High mobility group protein homolog NHP1, found in Babesia bovis.